The sequence spans 622 residues: Lamin Dm0 (622 aa).

The tract at residues 1–50 (MSSKSRRAGTATPQPGNTSTPRPPSAGPQPPPPSTHSQTASSPLSPTRHS) is disordered. N-acetylserine is present on serine 2. The segment at 2-56 (SSKSRRAGTATPQPGNTSTPRPPSAGPQPPPPSTHSQTASSPLSPTRHSRVAEKV) is head. Phosphothreonine is present on residues threonine 10, threonine 12, and threonine 20. The segment covering 21-34 (PRPPSAGPQPPPPS) has biased composition (pro residues). A phosphoserine mark is found at serine 25 and serine 34. Threonine 39 is subject to Phosphothreonine. 3 positions are modified to phosphoserine: serine 41, serine 42, and serine 45. Threonine 47 carries the phosphothreonine modification. The 357-residue stretch at 54–410 (EKVELQNLND…KLLVGEEARL (357 aa)) folds into the IF rod domain. The coil 1A stretch occupies residues 55–91 (KVELQNLNDRLATYIDRVRNLETENSRLTIEVQTTRD). Residues 92–103 (TVTRETTNIKNI) form a linker 1 region. The interval 104–241 (FEAELLETRR…QIHSQEINES (138 aa)) is coil 1B. Serine 235 bears the Phosphoserine mark. The tract at residues 242–265 (RRIKQTEYSEIDGRLSSEYDAKLK) is linker 2. Tyrosine 249 carries the post-translational modification Phosphotyrosine. Phosphoserine occurs at positions 250 and 311. The interval 266 to 408 (QSLQELRAQY…YDKLLVGEEA (143 aa)) is coil 2. Residues 409–619 (RLNITPATNT…GDPQQSNEKC (211 aa)) form a tail region. Threonine 413 and threonine 435 each carry phosphothreonine. Positions 429 to 440 (RNSTRATPSRRT) are enriched in polar residues. A disordered region spans residues 429–448 (RNSTRATPSRRTPSAAVKRK). Serine 442 is subject to Phosphoserine. The Nuclear localization signal signature appears at 446 to 451 (KRKRAV). Phosphoserine is present on residues serine 455 and serine 459. The region spanning 461–588 (ADYYVSASAK…RIVSQHTSSS (128 aa)) is the LTD domain. The residue at position 595 (serine 595) is a Phosphoserine. At threonine 597 the chain carries Phosphothreonine. The tract at residues 603–622 (EQLYHQQGDPQQSNEKCAIM) is disordered. Over residues 605 to 622 (LYHQQGDPQQSNEKCAIM) the composition is skewed to polar residues. At serine 615 the chain carries Phosphoserine. At cysteine 619 the chain carries Cysteine methyl ester. Cysteine 619 is lipidated: S-farnesyl cysteine. Positions 620–622 (AIM) are cleaved as a propeptide — removed in mature form.

It belongs to the intermediate filament family. In terms of assembly, interacts directly with LBR. Interacts with MAN1. Interacts with Ote. In terms of processing, three forms of lamin have been identified in D.melanogaster, lamin Dm0 is rapidly processed to lamin Dm1 in the cytoplasm, Dm1 is then assembled in the nuclear envelope and is then phosphorylated, forming lamin Dm2. Constitutively expressed in all tissues (at protein level). Expressed in spermatocytes (at protein level).

It is found in the nucleus. Its subcellular location is the nucleus inner membrane. The protein localises to the nucleus envelope. It localises to the nucleus lamina. The protein resides in the cytoplasm. It is found in the cytoskeleton. Its subcellular location is the spindle pole. In terms of biological role, lamins are components of the nuclear lamina, a fibrous layer on the nucleoplasmic side of the inner nuclear membrane, which is thought to provide a framework for the nuclear envelope and may also interact with chromatin. May have a role in the localization of the LEM domain proteins Ote, bocks and MAN1 to the nuclear membrane. In spermatocytes, plays a role in maintaining type-A lamin LamC nuclear localization; regulates meiotic cytokinesis by maintaining the structure of the spindle envelope, and by contributing to the formation of the contractile ring and central spindle. Required for nuclear migration and to link the microtubule organizing center (MTOC) to the nucleus. In addition, is required for nuclear envelope localization of klar. This Drosophila melanogaster (Fruit fly) protein is Lamin Dm0.